Reading from the N-terminus, the 543-residue chain is Mannuronan C5-epimerase (543 aa).

The N-terminal stretch at 1-35 (MPDISLSIPRRRLPRLRPLAAAVLGAVLLHGQAWA) is a signal peptide. PbH1 repeat units follow at residues 243 to 270 (GAEV…SISQ), 283 to 304 (RPKG…YCYE), 305 to 327 (ADDL…DPHD), 329 to 352 (SHRL…IVSR), 354 to 376 (VNDS…VLDR), 378 to 400 (SEGN…TLYE), and 401 to 423 (SGDN…RVRN). Catalysis depends on H326, which acts as the Proton acceptor.

The protein belongs to the D-mannuronate C5-epimerase family.

It localises to the periplasm. It carries out the reaction [(1-&gt;4)-beta-D-mannuronosyl](n) = [alginate](n). The protein operates within glycan biosynthesis; alginate biosynthesis. Inhibited by the presence of acetyl groups on the substrate. Catalyzes the epimerization of beta-D-mannuronate to alpha-L-guluronate during the synthesis of the linear polysaccharide alginate. In addition, is part of a periplasmic protein complex that protects alginate from degradation by AlgL by channeling the newly formed alginate polymer through a scaffold that transfers the alginate polymer through the periplasmic space to the outer membrane secretin AlgE. The protein is Mannuronan C5-epimerase of Pseudomonas aeruginosa (strain ATCC 15692 / DSM 22644 / CIP 104116 / JCM 14847 / LMG 12228 / 1C / PRS 101 / PAO1).